The primary structure comprises 98 residues: Toxin ParE1 (98 aa).

This sequence belongs to the RelE toxin family.

In terms of biological role, toxic component of a type II toxin-antitoxin (TA) system. Its toxic effect is neutralized by coexpression with cognate antitoxin ParD1. The protein is Toxin ParE1 (parE1) of Mycobacterium tuberculosis (strain CDC 1551 / Oshkosh).